The chain runs to 445 residues: Peptide chain release factor 1, mitochondrial (445 aa).

A mitochondrion-targeting transit peptide spans 1–61 (MNRHLCVWLF…LLSKNWSRRY (61 aa)). The interval 297-361 (PKDLRIDTFR…LRARLYQQII (65 aa)) is GGQ domain. Residues 311–313 (GGQ) carry the GGQ motif. Q313 is modified (N5-methylglutamine).

Belongs to the prokaryotic/mitochondrial release factor family. Post-translationally, methylation of glutamine in the GGQ triplet by HEMK1 is conserved from bacteria to mammals.

It is found in the mitochondrion. Functionally, mitochondrial peptide chain release factor that directs the termination of translation in response to the peptide chain non-canonical stop codons AGG and AGA. Non-canonical termination codons AGG and AGA are found at the end of MT-CO1/COX1 and MT-ND6/ND6 open reading frames, respectively. Recognizes non-canonical stop codons via a network of interactions between the codon, MTRF1 and the ribosomal RNA (rRNA): in contrast to other translation release factors, which identify the codon in the A-site via direct interactions of amino acid side chains with the bases, MTRF1 repositions the first 2 bases of the stop codon to use an intricate network of interactions that includes residues of the release factor, the rRNA of the small ribosomal subunit, as well as neighboring bases of the mRNA. The polypeptide is Peptide chain release factor 1, mitochondrial (Homo sapiens (Human)).